The sequence spans 153 residues: Deoxyuridine 5'-triphosphate nucleotidohydrolase (153 aa).

Substrate-binding positions include 65-67 (RSG), N78, and 82-84 (TID). Residues 132-153 (MTQRGEGGFGHTGISAVHPRTH) form a disordered region.

The protein belongs to the dUTPase family. It depends on Mg(2+) as a cofactor.

The enzyme catalyses dUTP + H2O = dUMP + diphosphate + H(+). Its pathway is pyrimidine metabolism; dUMP biosynthesis; dUMP from dCTP (dUTP route): step 2/2. Functionally, this enzyme is involved in nucleotide metabolism: it produces dUMP, the immediate precursor of thymidine nucleotides and it decreases the intracellular concentration of dUTP so that uracil cannot be incorporated into DNA. This is Deoxyuridine 5'-triphosphate nucleotidohydrolase from Chlorobium limicola (strain DSM 245 / NBRC 103803 / 6330).